We begin with the raw amino-acid sequence, 257 residues long: MDRIIEKLDHGWWVVSHEQKLWLPKGELPYGEAANFDLVGQRALQIGEWQGEPVWLIQQQRRYDMGSVRQVIDLDVGLFQLAGRGVQLAEFYRSHKYCGYCGHEMYPSKTEWAMLCSHCRERYYPQIAPCIIVAIRRDDSILLAQHTRHRNGVHTVLAGFVEVGETLEQAVAREVMEESGIKVKHLRYVTSQPWPFPQSLMTAFMAEYDSGDIVIDPKELLEANWYRYDDLPLLPPPGTVARRLIEDTVAMCRAEYE.

Lys25 and Arg69 together coordinate substrate. 2 residues coordinate Zn(2+): Cys98 and Cys101. Glu111 serves as a coordination point for substrate. Residues Cys116 and Cys119 each coordinate Zn(2+). Tyr124 is a binding site for substrate. The region spanning 125-248 is the Nudix hydrolase domain; it reads PQIAPCIIVA…TVARRLIEDT (124 aa). 3 residues coordinate a divalent metal cation: Ala158, Glu174, and Glu178. A Nudix box motif is present at residues 159-180; that stretch reads GFVEVGETLEQAVAREVMEESG. 192-199 is a binding site for substrate; it reads QPWPFPQS. Position 219 (Glu219) interacts with a divalent metal cation. A substrate-binding site is contributed by Ala241.

Belongs to the Nudix hydrolase family. NudC subfamily. Homodimer. Mg(2+) is required as a cofactor. The cofactor is Mn(2+). It depends on Zn(2+) as a cofactor.

The catalysed reaction is a 5'-end NAD(+)-phospho-ribonucleoside in mRNA + H2O = a 5'-end phospho-adenosine-phospho-ribonucleoside in mRNA + beta-nicotinamide D-ribonucleotide + 2 H(+). The enzyme catalyses NAD(+) + H2O = beta-nicotinamide D-ribonucleotide + AMP + 2 H(+). It catalyses the reaction NADH + H2O = reduced beta-nicotinamide D-ribonucleotide + AMP + 2 H(+). Functionally, mRNA decapping enzyme that specifically removes the nicotinamide adenine dinucleotide (NAD) cap from a subset of mRNAs by hydrolyzing the diphosphate linkage to produce nicotinamide mononucleotide (NMN) and 5' monophosphate mRNA. The NAD-cap is present at the 5'-end of some mRNAs and stabilizes RNA against 5'-processing. Has preference for mRNAs with a 5'-end purine. Catalyzes the hydrolysis of a broad range of dinucleotide pyrophosphates. This Escherichia coli O157:H7 protein is NAD-capped RNA hydrolase NudC.